Consider the following 276-residue polypeptide: Checkpoint protein HUS1B (276 aa).

This sequence belongs to the HUS1 family. In terms of assembly, interacts with RAD1 and RAD9B.

The protein is Checkpoint protein HUS1B (Hus1b) of Mus musculus (Mouse).